The sequence spans 178 residues: Endothelin-2 (178 aa).

The first 24 residues, 1–24, serve as a signal peptide directing secretion; that stretch reads MPAPGVHHPNTASPFLKTVAAGKG. Residues 25–46 constitute a propeptide that is removed on maturation; it reads QVAAAPEHPAPSARARGSHLRP. 2 disulfide bridges follow: cysteine 49–cysteine 63 and cysteine 51–cysteine 59. The propeptide occupies 70–178; sequence VNTPGQTAPY…RPTHPRRRKR (109 aa). Residues 96–111 form an endothelin-like region; it reads CECSSGGDPACATFCH. The tract at residues 156–178 is disordered; sequence RFPRRPQEAGRQLRPTHPRRRKR. The segment covering 169–178 has biased composition (basic residues); sequence RPTHPRRRKR.

It belongs to the endothelin/sarafotoxin family.

It localises to the secreted. Endothelins are endothelium-derived vasoconstrictor peptides. In Canis lupus familiaris (Dog), this protein is Endothelin-2 (EDN2).